The chain runs to 141 residues: ATP synthase epsilon chain (141 aa).

Belongs to the ATPase epsilon chain family. F-type ATPases have 2 components, CF(1) - the catalytic core - and CF(0) - the membrane proton channel. CF(1) has five subunits: alpha(3), beta(3), gamma(1), delta(1), epsilon(1). CF(0) has three main subunits: a, b and c.

It is found in the cell inner membrane. Functionally, produces ATP from ADP in the presence of a proton gradient across the membrane. The sequence is that of ATP synthase epsilon chain from Cellvibrio japonicus (strain Ueda107) (Pseudomonas fluorescens subsp. cellulosa).